Reading from the N-terminus, the 337-residue chain is Ribosomal RNA small subunit methyltransferase C (337 aa).

It belongs to the methyltransferase superfamily. RsmC family. In terms of assembly, monomer.

The protein localises to the cytoplasm. It carries out the reaction guanosine(1207) in 16S rRNA + S-adenosyl-L-methionine = N(2)-methylguanosine(1207) in 16S rRNA + S-adenosyl-L-homocysteine + H(+). In terms of biological role, specifically methylates the guanine in position 1207 of 16S rRNA in the 30S particle. The chain is Ribosomal RNA small subunit methyltransferase C from Acinetobacter baumannii (strain ATCC 17978 / DSM 105126 / CIP 53.77 / LMG 1025 / NCDC KC755 / 5377).